Here is a 45-residue protein sequence, read N- to C-terminus: MTKRTFGGTSRKRKRVSGFRVRMRSHTGRRVVRTRRKRGRSRLTV.

Positions 1-45 (MTKRTFGGTSRKRKRVSGFRVRMRSHTGRRVVRTRRKRGRSRLTV) are disordered. Residues 10-45 (SRKRKRVSGFRVRMRSHTGRRVVRTRRKRGRSRLTV) are compositionally biased toward basic residues.

The protein belongs to the bacterial ribosomal protein bL34 family.

The chain is Large ribosomal subunit protein bL34 from Prochlorococcus marinus (strain NATL2A).